A 160-amino-acid polypeptide reads, in one-letter code: Tic20 family protein (160 aa).

4 consecutive transmembrane segments (helical) span residues 13–33 (FFSA…GGFL), 53–73 (FYYQ…MAVV), 87–107 (MQAI…AYVI), and 122–142 (NFAF…SVLG).

The protein belongs to the Tic20 family.

The protein resides in the cell membrane. This Synechocystis sp. (strain ATCC 27184 / PCC 6803 / Kazusa) protein is Tic20 family protein.